The sequence spans 475 residues: Cytosolic enolase 3 (475 aa).

Position 2 is an N-acetylserine (Ser-2). 2 residues coordinate substrate: His-200 and Glu-209. Asp-252 (proton donor) is an active-site residue. Mg(2+) contacts are provided by Asp-287, Glu-336, and Asp-361. Residues Glu-336 and Asp-361 each contribute to the substrate site. The active-site Proton acceptor is Lys-386. Substrate contacts are provided by residues 413 to 416 and Lys-437; that span reads SHRC.

It belongs to the enolase family. As to quaternary structure, homodimer. Mg(2+) serves as cofactor.

It is found in the cytoplasm. Its subcellular location is the nucleus. It carries out the reaction (2R)-2-phosphoglycerate = phosphoenolpyruvate + H2O. Its pathway is carbohydrate degradation; glycolysis; pyruvate from D-glyceraldehyde 3-phosphate: step 4/5. In Arabidopsis thaliana (Mouse-ear cress), this protein is Cytosolic enolase 3 (ENO3).